Here is a 204-residue protein sequence, read N- to C-terminus: Ras-related protein RABG1 (204 aa).

A GTP-binding site is contributed by 12–19 (GDSGVGKT). An Effector region motif is present at residues 34–42 (HNSTIYVDL). GTP contacts are provided by residues 60 to 64 (DTAGQ), 122 to 125 (NKTD), and 155 to 156 (SA). 2 S-geranylgeranyl cysteine lipidation sites follow: cysteine 202 and cysteine 204. Cysteine 204 carries the cysteine methyl ester modification.

It belongs to the small GTPase superfamily. Rab family.

Its subcellular location is the cell membrane. In terms of biological role, intracellular vesicle trafficking and protein transport. The polypeptide is Ras-related protein RABG1 (RABG1) (Arabidopsis thaliana (Mouse-ear cress)).